The following is a 426-amino-acid chain: Tol-Pal system protein TolB (426 aa).

The first 25 residues, 1-25, serve as a signal peptide directing secretion; it reads MSITPSLSRRTVMSLLAAGLSPAFA.

The protein belongs to the TolB family. In terms of assembly, the Tol-Pal system is composed of five core proteins: the inner membrane proteins TolA, TolQ and TolR, the periplasmic protein TolB and the outer membrane protein Pal. They form a network linking the inner and outer membranes and the peptidoglycan layer.

It localises to the periplasm. Its function is as follows. Part of the Tol-Pal system, which plays a role in outer membrane invagination during cell division and is important for maintaining outer membrane integrity. The protein is Tol-Pal system protein TolB of Polaromonas sp. (strain JS666 / ATCC BAA-500).